Here is a 307-residue protein sequence, read N- to C-terminus: Small ribosomal subunit protein bS1 (307 aa).

S1 motif domains follow at residues 32 to 101 (GDTV…LSIR), 119 to 183 (DATV…LSHR), and 197 to 265 (GEVV…LSTK).

The protein belongs to the bacterial ribosomal protein bS1 family.

In terms of biological role, binds mRNA. The protein is Small ribosomal subunit protein bS1 (rpsA) of Synechococcus sp. (strain ATCC 27144 / PCC 6301 / SAUG 1402/1) (Anacystis nidulans).